Reading from the N-terminus, the 386-residue chain is 4-hydroxy-3-methylbut-2-en-1-yl diphosphate synthase (flavodoxin) (386 aa).

Residues C289, C292, C324, and E331 each contribute to the [4Fe-4S] cluster site.

The protein belongs to the IspG family. [4Fe-4S] cluster is required as a cofactor.

It carries out the reaction (2E)-4-hydroxy-3-methylbut-2-enyl diphosphate + oxidized [flavodoxin] + H2O + 2 H(+) = 2-C-methyl-D-erythritol 2,4-cyclic diphosphate + reduced [flavodoxin]. It functions in the pathway isoprenoid biosynthesis; isopentenyl diphosphate biosynthesis via DXP pathway; isopentenyl diphosphate from 1-deoxy-D-xylulose 5-phosphate: step 5/6. Functionally, converts 2C-methyl-D-erythritol 2,4-cyclodiphosphate (ME-2,4cPP) into 1-hydroxy-2-methyl-2-(E)-butenyl 4-diphosphate. In Nitratidesulfovibrio vulgaris (strain ATCC 29579 / DSM 644 / CCUG 34227 / NCIMB 8303 / VKM B-1760 / Hildenborough) (Desulfovibrio vulgaris), this protein is 4-hydroxy-3-methylbut-2-en-1-yl diphosphate synthase (flavodoxin).